A 303-amino-acid polypeptide reads, in one-letter code: Methionyl-tRNA formyltransferase (303 aa).

Residue 110 to 113 (SLLP) participates in (6S)-5,6,7,8-tetrahydrofolate binding.

This sequence belongs to the Fmt family.

It carries out the reaction L-methionyl-tRNA(fMet) + (6R)-10-formyltetrahydrofolate = N-formyl-L-methionyl-tRNA(fMet) + (6S)-5,6,7,8-tetrahydrofolate + H(+). In terms of biological role, attaches a formyl group to the free amino group of methionyl-tRNA(fMet). The formyl group appears to play a dual role in the initiator identity of N-formylmethionyl-tRNA by promoting its recognition by IF2 and preventing the misappropriation of this tRNA by the elongation apparatus. The polypeptide is Methionyl-tRNA formyltransferase (Campylobacter lari (strain RM2100 / D67 / ATCC BAA-1060)).